The chain runs to 469 residues: Putative dipeptidase MW1694 (469 aa).

Histidine 84 contributes to the Zn(2+) binding site. Aspartate 86 is a catalytic residue. A Zn(2+)-binding site is contributed by aspartate 115. Residue glutamate 149 is the Proton acceptor of the active site. Zn(2+) is bound by residues glutamate 150, aspartate 173, and histidine 440.

Belongs to the peptidase M20A family. It depends on Zn(2+) as a cofactor.

In Staphylococcus aureus (strain MW2), this protein is Putative dipeptidase MW1694.